The chain runs to 363 residues: MTLRVLAAMSGGVDSAVAAARAVEAGYDVTGVHLALSSNPQSYRTGARGCCTIEDSRDARRAADVIGIPFYIWDMAEEFDRDVVQDFVAEYAAGRTPNPCLRCNEKIKFQAVLERALALGFDAVCTGHHVRLENGRLRRSVDAVKDQSYVLAVLTREQLAHAIFPLGDCTKEEVRAEAARRGLTVADKPDSHDICFIADGDTSGFLERRLGSNPGPIVDETGQVVGEHRGAHAFTVGQRRGLNLSGAPHRRYVLSIEPVSNTVRVGPREALQVDRIVGERPVWSGCEPPEEWTPFLVQLRAHGEVYSCRARQYEGRVEILLDEPALGVAKGQAAVLYDGDVVMGSSTIAETSRVEQAAANHAE.

ATP contacts are provided by residues 8-15 and Leu34; that span reads AMSGGVDS. Cys103 acts as the Nucleophile in catalysis. An intrachain disulfide couples Cys103 to Cys195. An ATP-binding site is contributed by Gly127. Residues 145 to 147 are interaction with tRNA; that stretch reads KDQ. Cys195 serves as the catalytic Cysteine persulfide intermediate.

This sequence belongs to the MnmA/TRMU family.

Its subcellular location is the cytoplasm. It carries out the reaction S-sulfanyl-L-cysteinyl-[protein] + uridine(34) in tRNA + AH2 + ATP = 2-thiouridine(34) in tRNA + L-cysteinyl-[protein] + A + AMP + diphosphate + H(+). Catalyzes the 2-thiolation of uridine at the wobble position (U34) of tRNA, leading to the formation of s(2)U34. The polypeptide is tRNA-specific 2-thiouridylase MnmA (Thermobifida fusca (strain YX)).